Consider the following 373-residue polypeptide: XK-related protein 9 (373 aa).

The next 8 helical transmembrane spans lie at 8-28 (FMMS…DIVL), 38-58 (YVLG…VHCF), 166-186 (MVIM…QIAL), 206-226 (LFYK…LLFV), 230-250 (VALL…FINH), 256-276 (SVSM…FTFF), 295-315 (VLGT…IFNS), and 318-338 (FIPI…FLGV).

This sequence belongs to the XK family. Undergoes proteolytic processing by caspase-3 (CASP3), caspase-6 (CASP6) and caspase-7 (CASP7) to generate the XK-related protein 9, processed form, leading to its activation. In terms of tissue distribution, highly expressed in the small intestines; weakly expressed in the pancreas, liver, stomach, and large intestines.

It localises to the cell membrane. It catalyses the reaction a 1,2-diacyl-sn-glycero-3-phospho-L-serine(in) = a 1,2-diacyl-sn-glycero-3-phospho-L-serine(out). With respect to regulation, activated upon caspase cleavage to generate the XK-related protein 9, processed form. Does not act prior the onset of apoptosis. Functionally, phospholipid scramblase that promotes phosphatidylserine exposure on apoptotic cell surface. Phosphatidylserine is a specific marker only present at the surface of apoptotic cells and acts as a specific signal for engulfment. The chain is XK-related protein 9 from Mus musculus (Mouse).